Consider the following 101-residue polypeptide: MAKGQSLQDPFLNALRRERVPVSIYLVNGIKLQGQVESFDQFVILLKNTVSQMVYKHAISTVVPSPPVSHHSNTPSGSTNNYHGSNPSAPQQPQQDSDDAE.

In terms of domain architecture, Sm spans Asp9–Val68. Residues Val62 to Glu101 are disordered. Polar residues predominate over residues His70–Asn86.

Belongs to the Hfq family. As to quaternary structure, homohexamer.

In terms of biological role, RNA chaperone that binds small regulatory RNA (sRNAs) and mRNAs to facilitate mRNA translational regulation in response to envelope stress, environmental stress and changes in metabolite concentrations. Also binds with high specificity to tRNAs. In Yersinia pestis (strain Pestoides F), this protein is RNA-binding protein Hfq.